A 224-amino-acid polypeptide reads, in one-letter code: GTP-binding protein RHO3 (224 aa).

22–29 (GDGACGKT) contributes to the GTP binding site. The Effector region motif lies at 44-52 (YEPTVFENY). GTP is bound by residues 69–73 (DTAGQ) and 127–130 (LKCD). The tract at residues 205-224 (TPKGARDSAPEAESSSCTIM) is disordered. A Cysteine methyl ester modification is found at Cys-221. Cys-221 carries S-geranylgeranyl cysteine lipidation. A propeptide spans 222–224 (TIM) (removed in mature form).

This sequence belongs to the small GTPase superfamily. Rho family.

It is found in the cell membrane. Functionally, involved in the regulation of actin polarization. Rho proteins are required for distinct steps during polarized hyphal growth of A.gossypii. The sequence is that of GTP-binding protein RHO3 (RHO3) from Eremothecium gossypii (strain ATCC 10895 / CBS 109.51 / FGSC 9923 / NRRL Y-1056) (Yeast).